The sequence spans 205 residues: Phosphoserine phosphatase ThrH (205 aa).

Aspartate 7 functions as the Nucleophile in the catalytic mechanism. Mg(2+)-binding residues include aspartate 7 and glutamate 9. The Proton donor role is filled by glutamate 9. Residues glutamate 15, arginine 46, 90 to 91 (SD), and lysine 133 contribute to the substrate site. Aspartate 152 lines the Mg(2+) pocket. Asparagine 155 is a binding site for substrate.

The protein belongs to the thrH family. Mg(2+) is required as a cofactor.

The enzyme catalyses O-phospho-L-serine + H2O = L-serine + phosphate. It catalyses the reaction O-phospho-D-serine + H2O = D-serine + phosphate. The protein operates within amino-acid biosynthesis; L-serine biosynthesis; L-serine from 3-phospho-D-glycerate: step 3/3. In terms of biological role, phosphoserine phosphatase that mediates dephosphorylation of phosphoserine in the serine biosynthesis pathway. Also able to dephosphorylate other substrates such as phospho-L(or D)-threonine, with lower activity. Shows phosphoserine:homoserine phosphotransferase activity by transferring the phosphoryl group to homoserine using phosphoserine as the phosphoryl group donor. The protein is Phosphoserine phosphatase ThrH (thrH) of Pseudomonas aeruginosa (strain ATCC 15692 / DSM 22644 / CIP 104116 / JCM 14847 / LMG 12228 / 1C / PRS 101 / PAO1).